The sequence spans 469 residues: MALQTDTHAWRVEIGTRGLMFSNCVPLHLPEGQYHKLRLPVSAYEALAVARYGLVGSLWEVPAVNSALQCLAAAAPCKDVKIYPSCIFQVHAPMFVTIKTSLRCLNPHDLCLCLICVGAAILDIPLLCAPRDGAGARAAEGQAAAAQGGKLRVWGRLSPSSPISLSLAFPYAGPPPVAWYRHSIKLTRSEGVGIGKDCAQDHACPVPPQGHASSAADQAGVPERGRKRAHEGPGAGEAASAGRGDVALSQSRALLWRGLGWDTGRGRLAPGLAMSRDAASGSVHLDIQVDRAEEGWVCDVLLEPGPPTAREGCFLSMDPGLVTLKDAWTLFPLHPEHDAVVPPKEEIHVMAQGHLQGGTPSLWGFTFQEAACDQWVLRPRVWTAHSPIKMTVYNCGHKPLHIGPSTRLGLALFWPAERSDNLDAGRIFYQLTSGELYWGRTVARPPTLTLPVDELRPWPKLTPEEPMQH.

The interval 203–244 (ACPVPPQGHASSAADQAGVPERGRKRAHEGPGAGEAASAGRG) is disordered.

Belongs to the epstein-barr virus LF1 family.

This is an uncharacterized protein from Epstein-Barr virus (strain AG876) (HHV-4).